Consider the following 73-residue polypeptide: Large ribosomal subunit protein uL30 (73 aa).

The protein belongs to the universal ribosomal protein uL30 family. As to quaternary structure, part of the 50S ribosomal subunit.

This Borrelia hermsii (strain HS1 / DAH) protein is Large ribosomal subunit protein uL30.